Reading from the N-terminus, the 540-residue chain is MTLNSLPAWNSLQTHYGQIRDARLRDWFAPENDPAPTRAERFTLSGGGLAADFSKNRITDDTLKLLVQLAREAQVETRRDAMFAGETVNPTEGRAVLHTALRASNPTSPFYGKVQAERAKMAAFADKVRSGEWTGYTGKRIRHVVNIGIGGSDLGPKMVVHALQHLATPEISTHFVSNVDGADLYRVLQQINPEETLAIIVSKTFTTLETMTNANSLRDWFIQKGCPESELAKHFVGVSANPAEVVKFGIAQENVFEMWDWVGGRYSLWSAVGLSIVIAIGPKQFDELLAGANEMDEHFRSAPLERNLPVLMGMIGIWYRNFFGSQSYLVAPYSEALHFLPSYLQQLEMESNGKQACLDGSFVTYDTSAVTWGEPGTNGQHAFFQMLHQGPTIVPIDFVAVLTPEHPLVSHHPKLLANCFAQSEALMLGRTREEAEKVAGRDKPDLVPHIMFPGNRPTTTLLVDALTARSLGALIALYEHKVLVQGTVWNINSFDQWGVELGKILGKVVEADLTAATVDETKHDSSTSALIARARAALKR.

The active-site Proton donor is E350. Residues H381 and K503 contribute to the active site.

This sequence belongs to the GPI family.

The protein localises to the cytoplasm. It carries out the reaction alpha-D-glucose 6-phosphate = beta-D-fructose 6-phosphate. Its pathway is carbohydrate biosynthesis; gluconeogenesis. It functions in the pathway carbohydrate degradation; glycolysis; D-glyceraldehyde 3-phosphate and glycerone phosphate from D-glucose: step 2/4. Its function is as follows. Catalyzes the reversible isomerization of glucose-6-phosphate to fructose-6-phosphate. In Paraburkholderia phymatum (strain DSM 17167 / CIP 108236 / LMG 21445 / STM815) (Burkholderia phymatum), this protein is Glucose-6-phosphate isomerase.